Consider the following 546-residue polypeptide: Glucose-6-phosphate isomerase (546 aa).

Glutamate 353 functions as the Proton donor in the catalytic mechanism. Catalysis depends on residues histidine 384 and lysine 512.

It belongs to the GPI family.

It is found in the cytoplasm. It catalyses the reaction alpha-D-glucose 6-phosphate = beta-D-fructose 6-phosphate. The protein operates within carbohydrate biosynthesis; gluconeogenesis. It participates in carbohydrate degradation; glycolysis; D-glyceraldehyde 3-phosphate and glycerone phosphate from D-glucose: step 2/4. Its function is as follows. Catalyzes the reversible isomerization of glucose-6-phosphate to fructose-6-phosphate. The protein is Glucose-6-phosphate isomerase of Actinobacillus pleuropneumoniae serotype 5b (strain L20).